Reading from the N-terminus, the 130-residue chain is Small ribosomal subunit protein uS11 (130 aa).

Belongs to the universal ribosomal protein uS11 family. As to quaternary structure, part of the 30S ribosomal subunit. Interacts with proteins S7 and S18. Binds to IF-3.

In terms of biological role, located on the platform of the 30S subunit, it bridges several disparate RNA helices of the 16S rRNA. Forms part of the Shine-Dalgarno cleft in the 70S ribosome. This chain is Small ribosomal subunit protein uS11, found in Dehalococcoides mccartyi (strain ATCC BAA-2100 / JCM 16839 / KCTC 5957 / BAV1).